Here is a 954-residue protein sequence, read N- to C-terminus: Glycine dehydrogenase (decarboxylating) (954 aa).

K704 carries the N6-(pyridoxal phosphate)lysine modification.

It belongs to the GcvP family. In terms of assembly, the glycine cleavage system is composed of four proteins: P, T, L and H. It depends on pyridoxal 5'-phosphate as a cofactor.

The enzyme catalyses N(6)-[(R)-lipoyl]-L-lysyl-[glycine-cleavage complex H protein] + glycine + H(+) = N(6)-[(R)-S(8)-aminomethyldihydrolipoyl]-L-lysyl-[glycine-cleavage complex H protein] + CO2. The glycine cleavage system catalyzes the degradation of glycine. The P protein binds the alpha-amino group of glycine through its pyridoxal phosphate cofactor; CO(2) is released and the remaining methylamine moiety is then transferred to the lipoamide cofactor of the H protein. This chain is Glycine dehydrogenase (decarboxylating), found in Vibrio cholerae serotype O1 (strain ATCC 39541 / Classical Ogawa 395 / O395).